The primary structure comprises 220 residues: Deoxyribose-phosphate aldolase (220 aa).

Asp89 serves as the catalytic Proton donor/acceptor. The active-site Schiff-base intermediate with acetaldehyde is the Lys151. The active-site Proton donor/acceptor is Lys180.

Belongs to the DeoC/FbaB aldolase family. DeoC type 1 subfamily.

Its subcellular location is the cytoplasm. It carries out the reaction 2-deoxy-D-ribose 5-phosphate = D-glyceraldehyde 3-phosphate + acetaldehyde. It functions in the pathway carbohydrate degradation; 2-deoxy-D-ribose 1-phosphate degradation; D-glyceraldehyde 3-phosphate and acetaldehyde from 2-deoxy-alpha-D-ribose 1-phosphate: step 2/2. Its function is as follows. Catalyzes a reversible aldol reaction between acetaldehyde and D-glyceraldehyde 3-phosphate to generate 2-deoxy-D-ribose 5-phosphate. The chain is Deoxyribose-phosphate aldolase from Bdellovibrio bacteriovorus (strain ATCC 15356 / DSM 50701 / NCIMB 9529 / HD100).